A 1091-amino-acid chain; its full sequence is Constitutive coactivator of PPAR-gamma-like protein 2 (1091 aa).

Residues 35–53 (QQQHLHRQLPPAALAPGAP) show a composition bias toward low complexity. Disordered regions lie at residues 35–105 (QQQH…HPPP), 503–575 (NCLT…SEPH), 966–1010 (SRSS…QGSS), and 1037–1077 (VEEK…KNHV). Arg57 carries the omega-N-methylarginine modification. Basic residues predominate over residues 82–95 (SRHHHPAHHFHHHG). The segment covering 532–544 (GSEQITEAVQQQP) has biased composition (polar residues). Over residues 966 to 976 (SRSSRSRGSFG) the composition is skewed to low complexity. The residue at position 972 (Arg972) is an Omega-N-methylarginine. Basic and acidic residues predominate over residues 1062–1077 (SDDHCLPVKNGEKNHV).

It belongs to the constitutive coactivator of PPAR-gamma family.

The sequence is that of Constitutive coactivator of PPAR-gamma-like protein 2 (Fam120c) from Mus musculus (Mouse).